We begin with the raw amino-acid sequence, 20 residues long: Collagenolytic protease 36 kDa C (20 aa).

The Peptidase S1 domain maps to 1 to 20; the sequence is IVGGSEATSGQFPYQXSFQD. A disordered region spans residues 1–20; that stretch reads IVGGSEATSGQFPYQXSFQD.

This sequence belongs to the peptidase S1 family.

It carries out the reaction Hydrolysis of proteins, with broad specificity for peptide bonds. Native collagen is cleaved about 75% of the length of the molecule from the N-terminus. Low activity on small molecule substrates of both trypsin and chymotrypsin.. This enzyme is a serine protease capable of degrading the native triple helix of collagen. In Paralithodes camtschaticus (Red king crab), this protein is Collagenolytic protease 36 kDa C.